Here is a 317-residue protein sequence, read N- to C-terminus: Non-structural protein 2 (317 aa).

ATP is bound by residues 107–109, Lys188, and 221–223; these read SVR and HGK. Residues 205–241 are RNA-binding; the sequence is LVAELRWQYNRFAVITHGKGHYRVVKYSSVANHADRV. The active-site For NTPase and RTPase activities is the His225. Arg227 is a binding site for ATP.

The protein belongs to the rotavirus NSP2 family. Homooctamer. Interacts with VP1; this interaction is weak. Interacts with NSP5; this interaction leads to up-regulation of NSP5 phosphorylation and formation of viral factories. Interacts with host DCP1A, DCP1B, DDX6, EDC4 and EIF2S1/eIF2-alpha; these interactions are probably part of the sequestration of some host SGs and PBs proteins in viral factories. Requires Mg(2+) as cofactor.

The protein localises to the host cytoplasm. Functionally, participates in replication and packaging of the viral genome. Plays a crucial role, together with NSP5, in the formation of virus factories (viroplasms), which are large inclusions in the host cytoplasm where replication intermediates are assembled and viral RNA replication takes place. Displays ssRNA binding, NTPase, RNA triphosphatase (RTPase) and ATP-independent helix-unwinding activities. The unwinding activity may prepare and organize plus-strand RNAs for packaging and replication by removing interfering secondary structures. The RTPase activity plays a role in the removal of the gamma-phosphate from the rotavirus RNA minus strands of dsRNA genome segments. Participates in the selective exclusion of host proteins from stress granules (SG) and P bodies (PB). Also participates in the sequestration of these remodeled organelles in viral factories. In Rotavirus A (strain RVA/Human/United States/P/1974/G3P1A[8]) (RV-A), this protein is Non-structural protein 2.